We begin with the raw amino-acid sequence, 265 residues long: Phosphonates import ATP-binding protein PhnC (265 aa).

Residues 3-247 (LRLKQAFLHH…MLDTLYANEQ (245 aa)) enclose the ABC transporter domain. 36 to 43 (GPSGAGKS) contributes to the ATP binding site.

It belongs to the ABC transporter superfamily. Phosphonates importer (TC 3.A.1.9.1) family. As to quaternary structure, the complex is composed of two ATP-binding proteins (PhnC), two transmembrane proteins (PhnE) and a solute-binding protein (PhnD).

The protein resides in the cell inner membrane. The enzyme catalyses phosphonate(out) + ATP + H2O = phosphonate(in) + ADP + phosphate + H(+). Its function is as follows. Part of the ABC transporter complex PhnCDE involved in phosphonates import. Responsible for energy coupling to the transport system. In Pseudomonas fluorescens (strain Pf0-1), this protein is Phosphonates import ATP-binding protein PhnC.